Here is a 226-residue protein sequence, read N- to C-terminus: ATP synthase F(0) complex subunit a (226 aa).

Helical transmembrane passes span 6 to 26, 68 to 88, 97 to 117, 138 to 158, 164 to 184, and 189 to 209; these read FASF…IILF, WSLM…LGLL, QLSM…VMGF, IPML…ALAV, ITAG…LSTI, and ALII…VALI.

This sequence belongs to the ATPase A chain family. In terms of assembly, component of the ATP synthase complex composed at least of ATP5F1A/subunit alpha, ATP5F1B/subunit beta, ATP5MC1/subunit c (homooctomer), MT-ATP6/subunit a, MT-ATP8/subunit 8, ATP5ME/subunit e, ATP5MF/subunit f, ATP5MG/subunit g, ATP5MK/subunit k, ATP5MJ/subunit j, ATP5F1C/subunit gamma, ATP5F1D/subunit delta, ATP5F1E/subunit epsilon, ATP5PF/subunit F6, ATP5PB/subunit b, ATP5PD/subunit d, ATP5PO/subunit OSCP. ATP synthase complex consists of a soluble F(1) head domain (subunits alpha(3) and beta(3)) - the catalytic core - and a membrane F(0) domain - the membrane proton channel (subunits c, a, 8, e, f, g, k and j). These two domains are linked by a central stalk (subunits gamma, delta, and epsilon) rotating inside the F1 region and a stationary peripheral stalk (subunits F6, b, d, and OSCP). Interacts with DNAJC30; interaction is direct.

The protein localises to the mitochondrion inner membrane. The catalysed reaction is H(+)(in) = H(+)(out). Its function is as follows. Subunit a, of the mitochondrial membrane ATP synthase complex (F(1)F(0) ATP synthase or Complex V) that produces ATP from ADP in the presence of a proton gradient across the membrane which is generated by electron transport complexes of the respiratory chain. ATP synthase complex consist of a soluble F(1) head domain - the catalytic core - and a membrane F(1) domain - the membrane proton channel. These two domains are linked by a central stalk rotating inside the F(1) region and a stationary peripheral stalk. During catalysis, ATP synthesis in the catalytic domain of F(1) is coupled via a rotary mechanism of the central stalk subunits to proton translocation. With the subunit c (ATP5MC1), forms the proton-conducting channel in the F(0) domain, that contains two crucial half-channels (inlet and outlet) that facilitate proton movement from the mitochondrial intermembrane space (IMS) into the matrix. Protons are taken up via the inlet half-channel and released through the outlet half-channel, following a Grotthuss mechanism. In Pan troglodytes (Chimpanzee), this protein is ATP synthase F(0) complex subunit a.